We begin with the raw amino-acid sequence, 396 residues long: Elongation factor Tu (396 aa).

A tr-type G domain is found at 10–206 (KPHINVGTIG…ALDSYIPEPQ (197 aa)). Positions 19–26 (GHVDHGKT) are G1. 19–26 (GHVDHGKT) lines the GTP pocket. T26 lines the Mg(2+) pocket. The interval 60-64 (GITIN) is G2. Residues 81 to 84 (DCPG) are G3. GTP-binding positions include 81–85 (DCPGH) and 136–139 (NKAD). The interval 136 to 139 (NKAD) is G4. Residues 174–176 (SAL) are G5.

This sequence belongs to the TRAFAC class translation factor GTPase superfamily. Classic translation factor GTPase family. EF-Tu/EF-1A subfamily. As to quaternary structure, monomer.

Its subcellular location is the cytoplasm. It carries out the reaction GTP + H2O = GDP + phosphate + H(+). In terms of biological role, GTP hydrolase that promotes the GTP-dependent binding of aminoacyl-tRNA to the A-site of ribosomes during protein biosynthesis. This Nitrosospira multiformis (strain ATCC 25196 / NCIMB 11849 / C 71) protein is Elongation factor Tu.